A 284-amino-acid polypeptide reads, in one-letter code: Tropomyosin (284 aa).

Positions 1-284 (MDAIKKKMQA…DQTFQELFGY (284 aa)) form a coiled coil. The segment covering 113-142 (LEKATHTADESDRVRKVMENRSFQDEERAN) has biased composition (basic and acidic residues). The interval 113–143 (LEKATHTADESDRVRKVMENRSFQDEERANT) is disordered.

This sequence belongs to the tropomyosin family.

Its function is as follows. Tropomyosin, in association with the troponin complex, plays a central role in the calcium dependent regulation of muscle contraction. The sequence is that of Tropomyosin from Acanthocheilonema viteae (Filarial nematode worm).